The following is a 155-amino-acid chain: Protein-export protein SecB (155 aa).

Belongs to the SecB family. As to quaternary structure, homotetramer, a dimer of dimers. One homotetramer interacts with 1 SecA dimer.

Its subcellular location is the cytoplasm. In terms of biological role, one of the proteins required for the normal export of preproteins out of the cell cytoplasm. It is a molecular chaperone that binds to a subset of precursor proteins, maintaining them in a translocation-competent state. It also specifically binds to its receptor SecA. This is Protein-export protein SecB from Escherichia coli O127:H6 (strain E2348/69 / EPEC).